A 1693-amino-acid polypeptide reads, in one-letter code: Non-structural polyprotein pORF1 (1693 aa).

An Alphavirus-like MT domain is found at 56 to 240; the sequence is VFRPEVFWNH…HDVSNLRSWI (185 aa). The interval 241 to 439 is Y-domain; that stretch reads RTTKVTGDHP…FYAQCRRWLS (199 aa). Cysteines 434 and 481 form a disulfide. The tract at residues 442-509 is protease; it reads FHLDPRVLVF…EAYEGSDVDP (68 aa). A zinc-binding region spans residues 510–691; that stretch reads AESAISDISG…FSPGHVWESA (182 aa). Positions 671, 673, and 686 each coordinate Zn(2+). The interval 712–770 is hinge; it reads SSPAQPDLGFISEPSIPSRAATLTPAAPLPPPAPDPSPTPSAPARGEPAPGATARAPAI. The disordered stretch occupies residues 732 to 768; it reads ATLTPAAPLPPPAPDPSPTPSAPARGEPAPGATARAP. Pro residues predominate over residues 738 to 752; that stretch reads APLPPPAPDPSPTPS. Residues 775 to 921 form the Macro domain; sequence ARHRRLLFTY…LYLPELAARW (147 aa). The 149-residue stretch at 934-1082 folds into the (+)RNA virus helicase ATP-binding domain; sequence ITEDVARTAN…RPDLAPTSWW (149 aa). Positions 960–1204 are NTPase/helicase; sequence GCRVTPGVVQ…ISDAIVNNFF (245 aa). Residue 975-982 participates in ATP binding; sequence GVPGSGKS. The region spanning 1083 to 1216 is the (+)RNA virus helicase C-terminal domain; it reads HVTHRCPADV…GGEIGHQRPS (134 aa). The segment at 1207-1693 is RNA-directed RNA polymerase; it reads GGEIGHQRPS…LTNSILCRVE (487 aa). The RdRp catalytic domain maps to 1454-1565; that stretch reads SMVFENDFSE…LCSEYRQSPG (112 aa).

It belongs to the hepevirus non-structural polyprotein family. In terms of assembly, the protease domain interacts with host EIF2AK4 (via C-terminus); this interaction inhibits dimerization of EIF2AK4 and prevents EIF2AK4-mediated phosphorylation of host EIF2A. The cofactor is Mg(2+). ORF1 polyprotein does not seem to be processed into distinct enzymatic domains by a viral protease belonging to ORF1, but could be processed by a host serine protease like thrombin.

The protein localises to the host cytoplasm. The protein resides in the host perinuclear region. The catalysed reaction is GTP + S-adenosyl-L-methionine = N(7)-methyl-GTP + S-adenosyl-L-homocysteine. The enzyme catalyses RNA(n) + a ribonucleoside 5'-triphosphate = RNA(n+1) + diphosphate. Its activity is regulated as follows. Putative protease: Inhibited by chymostatin. In terms of biological role, methyltransferase: Displays a capping enzyme activity. This function is necessary since all viral RNAs are synthesized in the cytoplasm, and host capping enzymes are restricted to the nucleus. The enzymatic reaction involves a covalent link between 7-methyl-GMP and the methyltransferase, whereas eukaryotic capping enzymes form a covalent complex only with GMP. Methyltransferase catalyzes transfer of a methyl group from S-adenosylmethionine to GTP and GDP to yield m(7)GTP or m(7)GDP. GDP is a better substrate than GTP. This enzyme also displays guanylyltransferase activity to form a covalent complex, methyltransferase-m(7)GMP, from which 7-methyl-GMP is transferred to the mRNA to create the cap structure. Functionally, Y-domain: Indispensable for virus replication. Putative protease: The putative protease domain, although necessary for replication of the virus, may not be a protease but rather a structural Zn(2+)-binding domain. Inhibits induction of IFN-beta by MDA5 and RIG-I pathways and down-regulates the expression of MDA5. Its function is as follows. NTPase/helicase: Multi-functional protein that exhibits NTPase and RNA unwinding activities. Hydrolyzes all NTPs efficiently and unwinds RNA duplexes containing 5' overhangs. Possesses a sequence independent RNA-5'-triphosphatase (RTPase) activity suggestive of its role in forming viral cap structure. Also participates in viral genome replication, RNA translocation and genome packaging/unpackaging. In terms of biological role, RNA-directed RNA polymerase: Plays an essential role in the virus replication. Binds to the 3'-end of the genomic RNA to initiate viral replication. The protein is Non-structural polyprotein pORF1 of Homo sapiens (Human).